Consider the following 230-residue polypeptide: Large ribosomal subunit protein uL1 (230 aa).

The protein belongs to the universal ribosomal protein uL1 family. Part of the 50S ribosomal subunit.

In terms of biological role, binds directly to 23S rRNA. The L1 stalk is quite mobile in the ribosome, and is involved in E site tRNA release. Protein L1 is also a translational repressor protein, it controls the translation of the L11 operon by binding to its mRNA. The polypeptide is Large ribosomal subunit protein uL1 (Lactobacillus gasseri (strain ATCC 33323 / DSM 20243 / BCRC 14619 / CIP 102991 / JCM 1131 / KCTC 3163 / NCIMB 11718 / NCTC 13722 / AM63)).